A 562-amino-acid chain; its full sequence is Arginine--tRNA ligase (562 aa).

Residues 129–139 carry the 'HIGH' region motif; the sequence is ANPTGPLHVGH.

The protein belongs to the class-I aminoacyl-tRNA synthetase family. In terms of assembly, monomer.

It is found in the cytoplasm. It carries out the reaction tRNA(Arg) + L-arginine + ATP = L-arginyl-tRNA(Arg) + AMP + diphosphate. This is Arginine--tRNA ligase from Xanthomonas axonopodis pv. citri (strain 306).